A 152-amino-acid chain; its full sequence is Ribonuclease H (152 aa).

In terms of domain architecture, RNase H type-1 spans M1–E142. Mg(2+)-binding residues include D10, E48, D70, and D134.

Belongs to the RNase H family. Monomer. It depends on Mg(2+) as a cofactor.

It is found in the cytoplasm. The enzyme catalyses Endonucleolytic cleavage to 5'-phosphomonoester.. Functionally, endonuclease that specifically degrades the RNA of RNA-DNA hybrids. The polypeptide is Ribonuclease H (Rickettsia typhi (strain ATCC VR-144 / Wilmington)).